The sequence spans 283 residues: MYKDRSGGGIMGGGGSSRSEILGGAIDRKRINDALDKHLKKSSPSTSRVFTSKDKDSVPSTSTAKSQLHSRSPDVESDTDSEGSDVSGSEGDDTSWISWFCNLRGNEFFCEVDEDYIQDDFNLCGLSGQVPYYDYALDLILDVESSNGDMFTEEQHEMVESAAEMLYGLIHVRYILTTKGMAAMMEKYKNYDFGRCPRVFCCGQSCLPVGQSDIPRSSTVKIYCPKCEDIYYPRSKYQGNIDGAYFGTTFPHLFLMAYGNMKPQKPAQNYVPKIFGFKVHNKQ.

Disordered regions lie at residues 1 to 23 (MYKD…EILG) and 35 to 92 (LDKH…SEGD). The span at 7–16 (GGGIMGGGGS) shows a compositional bias: gly residues. Over residues 58–70 (VPSTSTAKSQLHS) the composition is skewed to polar residues.

The protein belongs to the casein kinase 2 subunit beta family. In terms of assembly, heterotetramer of two catalytic alpha subunits and two regulatory beta subunits. Phosphorylated by alpha subunit.

It localises to the cytoplasm. The protein resides in the cytosol. In terms of biological role, plays a complex role in regulating the basal catalytic activity of the alpha subunit. The tetrameric holoenzyme CK2, composed of two alpha and two beta subunits, phosphorylates the transcription factor PIF1 after an exposure to light, resulting in a proteasome-dependent degradation of PIF1 and promotion of photomorphogenesis. CK2 phosphorylates translation initiation factors. May participate in the regulation of the initiation of translation. The protein is Putative casein kinase II subunit beta-4 of Arabidopsis thaliana (Mouse-ear cress).